Reading from the N-terminus, the 295-residue chain is MSSPAPDALLGPADIRELAAALGVRPTKQRGQNFVIDANTVRRIVRTAGVRPDDVVVEVGPGLGSLTLALLEAADRVIAVEIDDVLAGALPATIAARMPERAERFALVHSDAMHVRELPGPPPTALVANLPYNVAVPVLLHMLDTFPSIERTLVMVQAEVADRLAADPGSRVYGVPSVKANWHAEVKRAGSIGRNVFWPAPNVDSGLVSLVRRTEPIKTTASKTEVFAVVDAAFAQRRKTLRAALAGWAGSAAAAEAALVAAGVSPQARGESLTVEEFARIAENRGADHADDANN.

6 residues coordinate S-adenosyl-L-methionine: Asn33, Val35, Gly60, Glu81, Asp111, and Asn129.

The protein belongs to the class I-like SAM-binding methyltransferase superfamily. rRNA adenine N(6)-methyltransferase family. RsmA subfamily.

Its subcellular location is the cytoplasm. The enzyme catalyses adenosine(1518)/adenosine(1519) in 16S rRNA + 4 S-adenosyl-L-methionine = N(6)-dimethyladenosine(1518)/N(6)-dimethyladenosine(1519) in 16S rRNA + 4 S-adenosyl-L-homocysteine + 4 H(+). Functionally, specifically dimethylates two adjacent adenosines (A1518 and A1519) in the loop of a conserved hairpin near the 3'-end of 16S rRNA in the 30S particle. May play a critical role in biogenesis of 30S subunits. This chain is Ribosomal RNA small subunit methyltransferase A, found in Streptomyces avermitilis (strain ATCC 31267 / DSM 46492 / JCM 5070 / NBRC 14893 / NCIMB 12804 / NRRL 8165 / MA-4680).